The sequence spans 299 residues: Putative syntaxin-2 (299 aa).

Residues 1 to 270 (MRDRLNEFQS…SAMRKKICVA (270 aa)) are Cytoplasmic-facing. Positions 112 to 146 (EKRMRQNQLELLKDNLNKLINLFNETHQDYKSRVS) form a coiled coil. Positions 193-255 (YEDVKKRHGE…KQGSANVKTA (63 aa)) constitute a t-SNARE coiled-coil homology domain. Residues 271 to 291 (AILITILLILIIVAIILAVVL) traverse the membrane as a helical; Anchor for type IV membrane protein segment. Residues 292 to 299 (SRGNNNNK) are Extracellular-facing.

The protein belongs to the syntaxin family.

The protein localises to the membrane. In terms of biological role, potentially involved in docking of synaptic vesicles at presynaptic active zones. The sequence is that of Putative syntaxin-2 (syx-2) from Caenorhabditis elegans.